Here is a 2812-residue protein sequence, read N- to C-terminus: Polyunsaturated fatty acid synthase subunit A (2812 aa).

A Ketosynthase family 3 (KS3) domain is found at 12 to 472; that stretch reads DTRIAVIGMS…GANYHAVLEE (461 aa). Catalysis depends on for beta-ketoacyl synthase activity residues Cys-213, His-348, and His-390. One can recognise a Malonyl-CoA:ACP transacylase (MAT) domain in the interval 602–913; the sequence is LFSGQGAQYT…TVSVNPASGK (312 aa). Residues 1000 to 1048 adopt a coiled-coil conformation; that stretch reads DEEAKREAARLQKQLEDAQRQLDEAKRAADEANQKLAAAKEEAKSAAAS. Carrier domains follow at residues 1114–1193, 1232–1308, and 1342–1418; these read ALLA…KAEI, ERAE…KAEI, and AKAE…KAEI. Residues Ser-1152, Ser-1267, and Ser-1377 each carry the O-(pantetheine 4'-phosphoryl)serine modification. Positions 1422–1442 are disordered; that stretch reads SAPAPAAAAPAPAAPAPAAAA. Over residues 1423–1442 the composition is skewed to low complexity; sequence APAPAAAAPAPAAPAPAAAA. Residues 1455 to 1531 form the Carrier 4 domain; the sequence is AKAETVVMEV…EVVDAMKAEI (77 aa). Position 1490 is an O-(pantetheine 4'-phosphoryl)serine (Ser-1490). Positions 1535-1555 are disordered; that stretch reads SAPAPAAAAPAPAAPAPAAAA. Positions 1536-1555 are enriched in low complexity; it reads APAPAAAAPAPAAPAPAAAA. Carrier domains follow at residues 1568 to 1644, 1681 to 1757, 1792 to 1868, and 1903 to 1979; these read AKAE…KAEI. 4 positions are modified to O-(pantetheine 4'-phosphoryl)serine: Ser-1603, Ser-1716, Ser-1827, and Ser-1938. The Ketoreductase (KR) domain occupies 2257–2484; the sequence is VVSGGARGIT…VKSICFGPWD (228 aa). Residues 2524–2651 form an N-terminal hotdog fold region; it reads EILVGNWRTP…RAVVVLSSQG (128 aa). The 289-residue stretch at 2524–2812 folds into the PKS/mFAS DH domain; sequence EILVGNWRTP…SVIATDSLAF (289 aa). Residues 2540–2800 form a dehydratase (DH) domain region; sequence ETITLHRKIS…NEQGDLFIDV (261 aa). Catalysis depends on His-2559, which acts as the Proton acceptor; for dehydratase activity. The C-terminal hotdog fold stretch occupies residues 2666–2812; it reads ADPAAQSAVY…SVIATDSLAF (147 aa). The Proton donor; for dehydratase activity role is filled by Asp-2730.

In terms of assembly, component of the polyunsaturated fatty acid synthase complex composed of at least ORF-A, ORF-B and ORF-C. Pantetheine 4'-phosphate serves as cofactor.

Its pathway is lipid metabolism; fatty acid biosynthesis. Poliketide synthase-like protein; part of the polyunsaturated fatty acid synthase composed of the 3 PKS-like subunits A, B and C. While the saturated fatty acids (SFAs) in Thraustochytrium are produced by the conventional fatty acid synthase (FAS) pathway, polyunsaturated fatty acids (PUFAs) including docosahexeanoic acid (DHA) and docosapentaenoic acid (DPA) are synthesized via an anaerobical PKS pathway. PUFA synthase assimilates fatty acyl-CoA, the product of FAS, as the starter unit to synthesize DPA, and this starter unit may be butyryl-CoA, hexanoyl-CoA, or octanoyl-CoA. DPA and DHA biosynthesis seem to differ by the reduction at the N-3 position by PUFA synthase, not the extension of carbon chain. In DHA biosynthesis, PUFA synthase extends the fatty acyl chain from the methyl toward the carboxyl end, and the double bond is formed when the carbon chain is growing, instead of afterward. Therefore, PUFA synthase is unable to transform DPA to DHA, suggesting that DPA is not the precursor of DHA. Moreover, DPA molecule is partly extended by FAS KS domain, so DPA biosynthesis is less dependent on PUFA synthase KS domain than DHA. The sequence is that of Polyunsaturated fatty acid synthase subunit A from Thraustochytrium sp. (strain ATCC 26185 / S-3).